The chain runs to 465 residues: ATP-dependent protease ATPase subunit HslU (465 aa).

ATP-binding positions include Val-18, 60–65 (GVGKTE), Asp-277, Glu-342, and Arg-414.

It belongs to the ClpX chaperone family. HslU subfamily. As to quaternary structure, a double ring-shaped homohexamer of HslV is capped on each side by a ring-shaped HslU homohexamer. The assembly of the HslU/HslV complex is dependent on binding of ATP.

Its subcellular location is the cytoplasm. Functionally, ATPase subunit of a proteasome-like degradation complex; this subunit has chaperone activity. The binding of ATP and its subsequent hydrolysis by HslU are essential for unfolding of protein substrates subsequently hydrolyzed by HslV. HslU recognizes the N-terminal part of its protein substrates and unfolds these before they are guided to HslV for hydrolysis. The polypeptide is ATP-dependent protease ATPase subunit HslU (Caldicellulosiruptor saccharolyticus (strain ATCC 43494 / DSM 8903 / Tp8T 6331)).